Here is a 251-residue protein sequence, read N- to C-terminus: MRKPIIAGNWKMNKTLSEAVSFVEEVKGQIPAASAVDAVVCSPALFLERLVAATQGTDLKVGAQNMHFEKNGAFTGEISPVALSDLKVSYVVLGHSERREMFAETDETVNKKTLAAFEHGLTPIVCCGETLEERESGKTFDLVAGQVTKALAGLTEEQVKATVIAYEPIWAIGTGKSSSAEDANEVCAHIRKVVAEAVSPAAAEAVRIQYGGSVKPGNIKEYMAQPDIDGALVGGASLEPASFLGLLEAVK.

9–11 (NWK) contributes to the substrate binding site. His95 functions as the Electrophile in the catalytic mechanism. The Proton acceptor role is filled by Glu167. Residues Gly173, Ser213, and 234–235 (GG) contribute to the substrate site. Phosphoserine is present on Ser213.

Belongs to the triosephosphate isomerase family. In terms of assembly, homodimer.

It is found in the cytoplasm. The enzyme catalyses D-glyceraldehyde 3-phosphate = dihydroxyacetone phosphate. It participates in carbohydrate biosynthesis; gluconeogenesis. The protein operates within carbohydrate degradation; glycolysis; D-glyceraldehyde 3-phosphate from glycerone phosphate: step 1/1. In terms of biological role, involved in the gluconeogenesis. Catalyzes stereospecifically the conversion of dihydroxyacetone phosphate (DHAP) to D-glyceraldehyde-3-phosphate (G3P). The chain is Triosephosphate isomerase from Bacillus cytotoxicus (strain DSM 22905 / CIP 110041 / 391-98 / NVH 391-98).